A 1546-amino-acid chain; its full sequence is DNA-directed RNA polymerase subunit beta' (1546 aa).

The Zn(2+) site is built by cysteine 57, cysteine 59, cysteine 72, and cysteine 75. Mg(2+) is bound by residues aspartate 756, aspartate 758, and aspartate 760. 4 residues coordinate Zn(2+): cysteine 1130, cysteine 1211, cysteine 1218, and cysteine 1221. The interval 1512-1546 (LEKYGEGSTSSDAVTGGQRYDDTRPGSSINPGYGD) is disordered. Residues 1536–1546 (PGSSINPGYGD) show a composition bias toward polar residues.

The protein belongs to the RNA polymerase beta' chain family. As to quaternary structure, the RNAP catalytic core consists of 2 alpha, 1 beta, 1 beta' and 1 omega subunit. When a sigma factor is associated with the core the holoenzyme is formed, which can initiate transcription. Mg(2+) serves as cofactor. Requires Zn(2+) as cofactor.

The catalysed reaction is RNA(n) + a ribonucleoside 5'-triphosphate = RNA(n+1) + diphosphate. Its function is as follows. DNA-dependent RNA polymerase catalyzes the transcription of DNA into RNA using the four ribonucleoside triphosphates as substrates. This is DNA-directed RNA polymerase subunit beta' from Deinococcus radiodurans (strain ATCC 13939 / DSM 20539 / JCM 16871 / CCUG 27074 / LMG 4051 / NBRC 15346 / NCIMB 9279 / VKM B-1422 / R1).